An 858-amino-acid chain; its full sequence is Rho GTPase-activating protein 17 (858 aa).

The region spanning 14 to 246 (QTVGRAEKTE…MRAHQDKWAE (233 aa)) is the BAR domain. Residues 252–442 (TPLEEHLKRS…PIIQHADWFF (191 aa)) enclose the Rho-GAP domain. A compositionally biased stretch (polar residues) spans 459–475 (TPNSNHSSHTGNDSDSG). The segment at 459-482 (TPNSNHSSHTGNDSDSGTLERKRP) is disordered. Phosphoserine is present on serine 484. Residues 516 to 823 (RKHISPAFQP…VTDTNSRVSE (308 aa)) form a disordered region. Positions 543–552 (PSQSSRADSN) are enriched in polar residues. Over residues 553–563 (SVGGPVPSSSG) the composition is skewed to low complexity. Residue serine 575 is modified to Phosphoserine. The span at 592–617 (RNSNQITTVPNQAQTGGNSHQLSVGT) shows a compositional bias: polar residues. The span at 637 to 650 (APAPPKPGNPPPGH) shows a compositional bias: pro residues. Over residues 653–702 (GQSSPGTGTSPKPSTRSPSPPQQQQQQQQQQQQQQQQQQQQQQQQQQQQQ) the composition is skewed to low complexity. Phosphoserine occurs at positions 710 and 712. Composition is skewed to pro residues over residues 716 to 729 (IQAP…PPTQ) and 738 to 756 (EPGP…PPPA). 3 positions are modified to phosphothreonine: threonine 742, threonine 746, and threonine 748. The SH3-binding motif lies at 742-755 (TPPQTPTPPSTPPP). Position 751 is a phosphoserine (serine 751). Threonine 752 bears the Phosphothreonine mark. Residues 757-769 (KQNSSQSETTQLH) are compositionally biased toward polar residues. Pro residues predominate over residues 784-794 (RPSVPPPPNPP). Over residues 806–823 (SVPTASRIVTDTNSRVSE) the composition is skewed to polar residues.

As to quaternary structure, component of a complex whose core is composed of ARHGAP17, AMOT, PALS1, PATJ and PARD3/PAR3. Interacts with NHERF1, FNBP1, TRIP10, CAPZA (CAPZA1, CAPZA2 or CAPZA3), CAPZB, CD2AP and SH3KBP1/CIN85. As to expression, highly expressed in brain; neuron-specific (at protein level). Isoform 2, isoform 3 and isoform 4 are predominantly expressed in neuronal tissues and correlate well with the differentiation of neurons, while isoform 1 is strongly expressed in embryonic brain.

The protein resides in the membrane. It localises to the cytoplasm. Its subcellular location is the cell junction. The protein localises to the tight junction. In terms of biological role, rho GTPase-activating protein involved in the maintenance of tight junction by regulating the activity of CDC42, thereby playing a central role in apical polarity of epithelial cells. Specifically acts as a GTPase activator for the CDC42 GTPase by converting it to an inactive GDP-bound state. The complex formed with AMOT acts by regulating the uptake of polarity proteins at tight junctions, possibly by deciding whether tight junction transmembrane proteins are recycled back to the plasma membrane or sent elsewhere. Participates in the Ca(2+)-dependent regulation of exocytosis, possibly by catalyzing GTPase activity of Rho family proteins and by inducing the reorganization of the cortical actin filaments. Acts as a GTPase activator in vitro for RAC1. In Rattus norvegicus (Rat), this protein is Rho GTPase-activating protein 17 (Arhgap17).